A 116-amino-acid polypeptide reads, in one-letter code: MTEQAEDALPISFTDAAALKVKTLLDEEENDALKLRVYVTGGGCSGFQYGFTFDEKVNEGDFTVEKQGVQLVVDPMSLQYLVGGEVDYTSGLEGSRFFVKNPNATTTCGCGASFSV.

Iron-sulfur cluster-binding residues include Cys44, Cys108, and Cys110.

The protein belongs to the HesB/IscA family. As to quaternary structure, homodimer. It depends on iron-sulfur cluster as a cofactor.

Functionally, required for insertion of 4Fe-4S clusters for at least IspG. The protein is Iron-sulfur cluster insertion protein ErpA of Shewanella piezotolerans (strain WP3 / JCM 13877).